The following is a 240-amino-acid chain: Tetrahydromethanopterin S-methyltransferase subunit A (240 aa).

Residues 1-218 (MADKREPAPG…KFHSGVHAGK (218 aa)) lie on the Cytoplasmic side of the membrane. His85 lines the 5-hydroxybenzimidazolylcob(I)amide pocket. A helical membrane pass occupies residues 219 to 239 (VEGAMIGLTITISLLGLLLLG). Residue Arg240 is a topological domain, extracellular.

The protein belongs to the MtrA family. The complex is composed of 8 subunits; MtrA, MtrB, MtrC, MtrD, MtrE, MtrF, MtrG and MtrH. Requires 5-hydroxybenzimidazolylcob(I)amide as cofactor.

The protein resides in the cell membrane. It catalyses the reaction 5-methyl-5,6,7,8-tetrahydromethanopterin + coenzyme M + 2 Na(+)(in) = 5,6,7,8-tetrahydromethanopterin + methyl-coenzyme M + 2 Na(+)(out). The protein operates within one-carbon metabolism; methanogenesis from CO(2); methyl-coenzyme M from 5,10-methylene-5,6,7,8-tetrahydromethanopterin: step 2/2. Functionally, part of a complex that catalyzes the formation of methyl-coenzyme M and tetrahydromethanopterin from coenzyme M and methyl-tetrahydromethanopterin. This is an energy-conserving, sodium-ion translocating step. In Methanosarcina mazei (strain ATCC BAA-159 / DSM 3647 / Goe1 / Go1 / JCM 11833 / OCM 88) (Methanosarcina frisia), this protein is Tetrahydromethanopterin S-methyltransferase subunit A.